The sequence spans 1335 residues: Bifunctional autolysin (1335 aa).

The N-terminal stretch at 1–29 (MAKKFNYKLPSMVALTLFGTAFTAHQANA) is a signal peptide. Disordered stretches follow at residues 51-88 (QAEK…QSTT), 100-262 (NEIS…KYKE), and 514-535 (WGTT…NNKL). Polar residues-rich tracts occupy residues 58–88 (EVTQ…QSTT), 100–127 (NEIS…VTKN), 143–155 (TDTN…QSVA), 176–223 (TASQ…NASG), and 244–258 (SLNN…TTSY). Positions 303 to 863 (VSSQKTSSLP…LSTQSTPAPK (561 aa)) are N-acetylmuramoyl-L-alanine amidase. A compositionally biased stretch (low complexity) spans 515–531 (GTTSTKPSQPSKPSGGT). GW domains are found at residues 533 to 610 (NKLT…YNTA), 612 to 686 (APVK…TASK), 700 to 774 (TVTN…YNTA), 776 to 850 (SPVK…APSK), 868 to 943 (STQT…TQNI), 945 to 1020 (KQTQ…QNST), and 1023 to 1096 (QSTP…KEKI). The interval 864–1335 (QVKPSTQTVN…GKYFEIPIYK (472 aa)) is endo-beta-N-acetylglucosaminidase.

The protein in the N-terminal section; belongs to the N-acetylmuramoyl-L-alanine amidase 2 family. In the C-terminal section; belongs to the glycosyl hydrolase 73 family. In terms of assembly, oligomer; forms a ring structure at the cell surface which is important for efficient partitioning of daughter cells after cell division. In terms of processing, undergoes proteolytic processing to generate the two extracellular lytic enzymes, probably at the septal region on the cell surface.

The protein resides in the secreted. The enzyme catalyses Hydrolyzes the link between N-acetylmuramoyl residues and L-amino acid residues in certain cell-wall glycopeptides.. It catalyses the reaction an N(4)-(oligosaccharide-(1-&gt;3)-[oligosaccharide-(1-&gt;6)]-beta-D-Man-(1-&gt;4)-beta-D-GlcNAc-(1-&gt;4)-alpha-D-GlcNAc)-L-asparaginyl-[protein] + H2O = an oligosaccharide-(1-&gt;3)-[oligosaccharide-(1-&gt;6)]-beta-D-Man-(1-&gt;4)-D-GlcNAc + N(4)-(N-acetyl-beta-D-glucosaminyl)-L-asparaginyl-[protein]. In terms of biological role, endohydrolysis of the di-N-acetylchitobiosyl unit in high-mannose glycopeptides and glycoproteins containing the -[(Man)5(GlcNAc)2]-Asn structure. One N-acetyl-D-glucosamine residue remains attached to the protein; the rest of the oligosaccharide is released intact. Cleaves the peptidoglycan connecting the daughter cells at the end of the cell division cycle, resulting in the separation of the two newly divided cells. Acts as an autolysin in penicillin-induced lysis. This chain is Bifunctional autolysin (atl), found in Staphylococcus epidermidis (strain ATCC 12228 / FDA PCI 1200).